The primary structure comprises 63 residues: 2-hydroxymuconate tautomerase (63 aa).

The active-site Proton acceptor; via imino nitrogen is P2.

The protein belongs to the 4-oxalocrotonate tautomerase family. As to quaternary structure, homohexamer.

The enzyme catalyses (2Z,4E)-2-hydroxyhexa-2,4-dienedioate = (3E)-2-oxohex-3-enedioate. It participates in aromatic compound metabolism; salicylate degradation. Its function is as follows. Catalyzes the ketonization of 2-hydroxymuconate stereoselectively to yield 2-oxo-3-hexenedioate. In Pseudomonas fluorescens, this protein is 2-hydroxymuconate tautomerase (nahJ).